A 934-amino-acid polypeptide reads, in one-letter code: MAAAAEPGARTWPGSGSPRLGSPAGSPVLGISGRTRPGSGPERTSRAIGSAAPGHSFRKVTLTKPTFCHLCSDFIWGLAGFLCDVCNFMSHEKCLKQVKTPCTSIAPSLVRVPVAHCFGSLGLYKRKFCVVCRKSLEVPAFRCEVCELHVHPDCVPFACSDCRQCHQDGQQDYDTYHHHWREGNLPSGARCEVCRKTCGSSDVLAGVRCEWCGVQAHSVCSTALAPECTFGRLRSMVLPPSCVRLLSRNFSKMHCFRIPETMVLELGDGDDGVDGSAAIGTGREVLTATESTKQTLKIFDGNDSMRKNQFRLVTVSRLARNEEVMEAALRAYYISEDPKDFQLQALPLSGNAQALGKAGTTEEEASKGSCPRDSVPEAWVIRSLPRTQEILKIYPGWLKVGVAYVSIRVNSQSTARSVVQEVLPLFGQQVEDKERFQLIEVLMSSRQVQRTVLADEEPLLDRLWDIRQTSVRQVSQTRFYVAETRATAPRVSLFVGGLPPGLSPQDYSNLLHEAMATKAAVVSVSHVYSLQGAVILDVTCFAEAERLYMLARDTAVHGRPLTALVLPDVLHTKLPPDCCPLLVFVNPKSGGLKGRELLCSFRKLLNPHQVFELTNGGPLPGFHLFSQVPSFRVLVCGGDGTVGWVLAALEETRRHLACPEPSVAILPLGTGNDLGRVLRWGAGYSGEDPFSVLVSVDEADAVLMDRWTILLDAHEIDSTENNVVETEPPKIVQMNNYCGIGIDAELSLDFHQAREEEPGKFTSRFHNKGVYVRVGLQKISHSRSLHKEIRLQVEQQEVELPSIEGLIFINIPSWGSGADLWGSDNDSRFEKPRIDDGLLEVVGVTGVVHMGQVQGGLRSGIRIAQGSYFRVTLLKATPVQVDGEPWVQAPGHMIISATAPKVHMLRKAKQKPRKAGANRDTRVDTLPAPEGNPL.

The tract at residues 1-50 (MAAAAEPGARTWPGSGSPRLGSPAGSPVLGISGRTRPGSGPERTSRAIGS) is disordered. 2 positions are modified to phosphoserine: Ser22 and Ser26. 3 consecutive Phorbol-ester/DAG-type zinc fingers follow at residues 54-102 (GHSF…KTPC), 115-162 (AHCF…CSDC), and 177-228 (HHHW…APEC). In terms of domain architecture, Ras-associating spans 387-486 (TQEILKIYPG…TRFYVAETRA (100 aa)). 2 short sequence motifs (LXXLL motif) span residues 547–551 (LYMLA) and 566–570 (LPDVL). Residues 576–713 (PDCCPLLVFV…MDRWTILLDA (138 aa)) form the DAGKc domain. The span at 905-916 (LRKAKQKPRKAG) shows a compositional bias: basic residues. The disordered stretch occupies residues 905–934 (LRKAKQKPRKAGANRDTRVDTLPAPEGNPL).

It belongs to the eukaryotic diacylglycerol kinase family. As to quaternary structure, interacts with RHOA (constitutively activated, GTP-bound); the interaction inhibits DGKQ. Interacts with PRKCE. Interacts with PRKCH. Interacts with PLCB1. Interacts with NR5A1; the interaction requires both LXXLL motifs in DGKQ and is required for full phosphatidic acid-mediated activation of NR5A1. In terms of processing, phosphorylated by PRKCE and PRKCH in vitro. Widely expressed in all brain regions, including the cortex and hippocampus with a specific expression in neuronal cells (at protein level).

The protein localises to the cytoplasm. Its subcellular location is the cytosol. It localises to the cell membrane. It is found in the synapse. The protein resides in the cytoskeleton. The protein localises to the nucleus. Its subcellular location is the nucleus speckle. It localises to the nucleus matrix. It carries out the reaction a 1,2-diacyl-sn-glycerol + ATP = a 1,2-diacyl-sn-glycero-3-phosphate + ADP + H(+). The enzyme catalyses a 1-O-alkyl-sn-glycerol + ATP = a 1-O-alkyl-sn-glycero-3-phosphate + ADP + H(+). The catalysed reaction is 1-O-alkyl-2-acyl-sn-glycerol + ATP = 1-O-alkyl-2-acyl-sn-glycero-3-phosphate + ADP + H(+). It catalyses the reaction 1,2-di-(9Z-octadecenoyl)-sn-glycerol + ATP = 1,2-di-(9Z-octadecenoyl)-sn-glycero-3-phosphate + ADP + H(+). It carries out the reaction 1-O-hexadecyl-sn-glycerol + ATP = 1-O-hexadecyl-sn-glycero-3-phosphate + ADP + H(+). The enzyme catalyses 1-O-hexadecyl-2-acetyl-sn-glycerol + ATP = 1-O-hexadecyl-2-acetyl-sn-glycero-3-phosphate + ADP + H(+). The catalysed reaction is 1-octadecanoyl-2-(5Z,8Z,11Z,14Z-eicosatetraenoyl)-sn-glycerol + ATP = 1-octadecanoyl-2-(5Z,8Z,11Z,14Z-eicosatetraenoyl)-sn-glycero-3-phosphate + ADP + H(+). It participates in lipid metabolism; glycerolipid metabolism. Its activity is regulated as follows. Activated by phosphatidylserine. Diacylglycerol kinase that converts diacylglycerol/DAG into phosphatidic acid/phosphatidate/PA and regulates the respective levels of these two bioactive lipids. Thereby, acts as a central switch between the signaling pathways activated by these second messengers with different cellular targets and opposite effects in numerous biological processes. Within the adrenocorticotropic hormone signaling pathway, produces phosphatidic acid which in turn activates NR5A1 and subsequent steroidogenic gene transcription. Also functions downstream of the nerve growth factor signaling pathway being specifically activated in the nucleus by the growth factor. Through its diacylglycerol activity also regulates synaptic vesicle endocytosis. The protein is Diacylglycerol kinase theta (Dgkq) of Mus musculus (Mouse).